Consider the following 255-residue polypeptide: Leucyl/phenylalanyl-tRNA--protein transferase (255 aa).

The protein belongs to the L/F-transferase family.

The protein localises to the cytoplasm. The catalysed reaction is N-terminal L-lysyl-[protein] + L-leucyl-tRNA(Leu) = N-terminal L-leucyl-L-lysyl-[protein] + tRNA(Leu) + H(+). It catalyses the reaction N-terminal L-arginyl-[protein] + L-leucyl-tRNA(Leu) = N-terminal L-leucyl-L-arginyl-[protein] + tRNA(Leu) + H(+). The enzyme catalyses L-phenylalanyl-tRNA(Phe) + an N-terminal L-alpha-aminoacyl-[protein] = an N-terminal L-phenylalanyl-L-alpha-aminoacyl-[protein] + tRNA(Phe). In terms of biological role, functions in the N-end rule pathway of protein degradation where it conjugates Leu, Phe and, less efficiently, Met from aminoacyl-tRNAs to the N-termini of proteins containing an N-terminal arginine or lysine. This chain is Leucyl/phenylalanyl-tRNA--protein transferase, found in Polaromonas sp. (strain JS666 / ATCC BAA-500).